The sequence spans 143 residues: Deoxyuridine 5'-triphosphate nucleotidohydrolase (143 aa).

Substrate-binding positions include 63–65 (RSG), Asn76, 80–82 (TID), and Lys90.

This sequence belongs to the dUTPase family. Requires Mg(2+) as cofactor.

The enzyme catalyses dUTP + H2O = dUMP + diphosphate + H(+). Its pathway is pyrimidine metabolism; dUMP biosynthesis; dUMP from dCTP (dUTP route): step 2/2. In terms of biological role, this enzyme is involved in nucleotide metabolism: it produces dUMP, the immediate precursor of thymidine nucleotides and it decreases the intracellular concentration of dUTP so that uracil cannot be incorporated into DNA. The protein is Deoxyuridine 5'-triphosphate nucleotidohydrolase of Clostridioides difficile (Peptoclostridium difficile).